The sequence spans 549 residues: Small ribosomal subunit protein bS1 (549 aa).

6 consecutive S1 motif domains span residues 21 to 87 (GSIV…LSRE), 105 to 171 (KATV…VSRR), 192 to 260 (GSEV…LGLK), 277 to 347 (NSKL…LGLK), 364 to 434 (GDKV…LGIK), and 451 to 512 (GAVV…LSVK).

This sequence belongs to the bacterial ribosomal protein bS1 family.

Binds mRNA; thus facilitating recognition of the initiation point. It is needed to translate mRNA with a short Shine-Dalgarno (SD) purine-rich sequence. The protein is Small ribosomal subunit protein bS1 (rpsA) of Haemophilus influenzae (strain ATCC 51907 / DSM 11121 / KW20 / Rd).